We begin with the raw amino-acid sequence, 382 residues long: MAP kinase-activated protein kinase 3 (382 aa).

N-acetylmethionine is present on Met-1. A disordered region spans residues 1 to 34 (MDGETAEEQGGPVPPPVAPGGPGLGGAPGGRREP). Over residues 20–29 (GGPGLGGAPG) the composition is skewed to gly residues. The 261-residue stretch at 44 to 304 (QLSKQVLGLG…ITQFMNHPWI (261 aa)) folds into the Protein kinase domain. Residues 50–58 (LGLGVNGKV) and Lys-73 each bind ATP. The active-site Proton acceptor is Asp-166. Thr-201 carries the phosphothreonine; by MAPK14 modification. At Ser-251 the chain carries Phosphoserine; by MAPK14. Ser-307 carries the phosphoserine; by autocatalysis modification. An autoinhibitory helix region spans residues 307–343 (SMVVPQTPLHTARVLQEDKDHWDEVKEEMTSALATMR). Thr-313 bears the Phosphothreonine; by MAPK14 mark. The Nuclear export signal (NES) motif lies at 335-344 (MTSALATMRV). The tract at residues 345–369 (DYDQVKIKDLKTSNNRLLNKRRKKQ) is p38 MAPK-binding site. 2 short sequence motifs (bipartite nuclear localization signal) span residues 350–353 (KIKD) and 364–368 (KRRKK). Residues 357 to 382 (SNNRLLNKRRKKQAGSSSASQGCNNQ) form a disordered region. Residues 370–382 (AGSSSASQGCNNQ) show a composition bias toward polar residues.

Belongs to the protein kinase superfamily. CAMK Ser/Thr protein kinase family. Heterodimer with p38-alpha/MAPK14. The heterodimer with p38-alpha/MAPK14 forms a stable complex: molecules are positioned 'face to face' so that the ATP-binding sites of both kinases are at the heterodimer interface. Interacts with TCF3 and with polycomb proteins, such as PCH2 and BMI1/PCGF4. Phosphorylated and activated by MAPK1/ERK2 and MAPK3/ERK1. Phosphorylated and activated by MAP kinase p38-alpha/MAPK14 at Thr-201, Ser-251 and Thr-313. In terms of tissue distribution, widely expressed, with a higher expression level observed in heart and skeletal muscle. No expression in brain. Expressed in the retinal pigment epithelium.

The protein localises to the nucleus. It localises to the cytoplasm. The catalysed reaction is L-seryl-[protein] + ATP = O-phospho-L-seryl-[protein] + ADP + H(+). It carries out the reaction L-threonyl-[protein] + ATP = O-phospho-L-threonyl-[protein] + ADP + H(+). Its activity is regulated as follows. Activated following phosphorylation by p38-alpha/MAPK14 following various stresses. Inhibited by ligand 5B (2'-[2-(1,3-benzodioxol-5-yl)pyrimidin-4-yl]-5',6'-dihydrospiro[piperidine-4,7'-pyrrolo[3,2-c]pyridin]- 4'(1'h)-one) and ligand P4O (2-[2-(2-fluorophenyl)pyridin-4-yl]-1,5,6,7-tetrahydro- 4h-pyrrolo[3,2-c]pyridin-4-one), 2 ATP-competitive inhibitors. Stress-activated serine/threonine-protein kinase involved in cytokines production, endocytosis, cell migration, chromatin remodeling and transcriptional regulation. Following stress, it is phosphorylated and activated by MAP kinase p38-alpha/MAPK14, leading to phosphorylation of substrates. Phosphorylates serine in the peptide sequence, Hyd-X-R-X(2)-S, where Hyd is a large hydrophobic residue. MAPKAPK2 and MAPKAPK3, share the same function and substrate specificity, but MAPKAPK3 kinase activity and level in protein expression are lower compared to MAPKAPK2. Phosphorylates HSP27/HSPB1, KRT18, KRT20, RCSD1, RPS6KA3, TAB3 and TTP/ZFP36. Mediates phosphorylation of HSP27/HSPB1 in response to stress, leading to dissociate HSP27/HSPB1 from large small heat-shock protein (sHsps) oligomers and impair their chaperone activities and ability to protect against oxidative stress effectively. Involved in inflammatory response by regulating tumor necrosis factor (TNF) and IL6 production post-transcriptionally: acts by phosphorylating AU-rich elements (AREs)-binding proteins, such as TTP/ZFP36, leading to regulate the stability and translation of TNF and IL6 mRNAs. Phosphorylation of TTP/ZFP36, a major post-transcriptional regulator of TNF, promotes its binding to 14-3-3 proteins and reduces its ARE mRNA affinity leading to inhibition of dependent degradation of ARE-containing transcript. Involved in toll-like receptor signaling pathway (TLR) in dendritic cells: required for acute TLR-induced macropinocytosis by phosphorylating and activating RPS6KA3. Also acts as a modulator of Polycomb-mediated repression. This is MAP kinase-activated protein kinase 3 (MAPKAPK3) from Homo sapiens (Human).